We begin with the raw amino-acid sequence, 161 residues long: uncharacterized protein (161 aa).

This is an uncharacterized protein from Escherichia coli (strain K12).